Consider the following 232-residue polypeptide: Alpha N-terminal protein methyltransferase 1 (232 aa).

S-adenosyl-L-methionine contacts are provided by residues G71, R76, 123–124, and Q139; that span reads MQ.

It belongs to the methyltransferase superfamily. NTM1 family.

Its subcellular location is the cytoplasm. The catalysed reaction is N-terminal L-alanyl-L-prolyl-L-lysyl-[protein] + 3 S-adenosyl-L-methionine = N-terminal N,N,N-trimethyl-L-alanyl-L-prolyl-L-lysyl-[protein] + 3 S-adenosyl-L-homocysteine + 3 H(+). The enzyme catalyses N-terminal L-seryl-L-prolyl-L-lysyl-[protein] + 3 S-adenosyl-L-methionine = N-terminal N,N,N-trimethyl-L-seryl-L-prolyl-L-lysyl-[protein] + 3 S-adenosyl-L-homocysteine + 3 H(+). It catalyses the reaction N-terminal L-prolyl-L-prolyl-L-lysyl-[protein] + 2 S-adenosyl-L-methionine = N-terminal N,N-dimethyl-L-prolyl-L-prolyl-L-lysyl-[protein] + 2 S-adenosyl-L-homocysteine + 2 H(+). Functionally, alpha-N-methyltransferase that methylates the N-terminus of target proteins containing the N-terminal motif [Ala/Pro/Ser]-Pro-Lys when the initiator Met is cleaved. Specifically catalyzes mono-, di- or tri-methylation of exposed alpha-amino group of Ala or Ser residue in the [Ala/Ser]-Pro-Lys motif and mono- or di-methylation of Pro in the Pro-Pro-Lys motif. Responsible for the N-terminal methylation of the ribosomal proteins RPL12A, RPL12B, RPS25A and RPS25B. The protein is Alpha N-terminal protein methyltransferase 1 (TAE1) of Saccharomyces cerevisiae (strain ATCC 204508 / S288c) (Baker's yeast).